Here is a 1435-residue protein sequence, read N- to C-terminus: Neuropathy target esterase sws (1435 aa).

Topologically, residues 1–35 are lumenal; that stretch reads MDVLELLRVSGSNMYYSTFLADAWCYYISNQITMT. Residues 36 to 56 traverse the membrane as a helical segment; the sequence is MYLYCALGVLSMLFIGWFVYF. The Cytoplasmic portion of the chain corresponds to 57-1435; sequence KRLARLRLRH…NTNNETKNYL (1379 aa). 176-303 is a binding site for a nucleoside 3',5'-cyclic phosphate; sequence IFGHFEKPIF…IRVIQVIMIR (128 aa). Residues 361–372 show a composition bias toward low complexity; the sequence is AASGTAGSTHTA. Disordered stretches follow at residues 361-405 and 422-452; these read AASG…ELSG and NSYPPLYHQRESDGNLSTRRGSITQQEQPEV. Positions 435-449 are enriched in polar residues; sequence GNLSTRRGSITQQEQ. The residue at position 443 (Ser443) is a Phosphoserine. Residues 474-601 and 590-717 each bind a nucleoside 3',5'-cyclic phosphate; these read ELGL…VVRR and IVLD…LSHR. The 167-residue stretch at 944–1110 folds into the PNPLA domain; sequence LVLGGGGARG…VNNLPGHLWR (167 aa). The short motif at 948–953 is the GXGXXG element; that stretch reads GGGARG. The GXSXG motif lies at 975-979; sequence GVSIG. Ser977 acts as the Nucleophile in catalysis. Asp1097 (proton acceptor) is an active-site residue. A DGA/G motif is present at residues 1097–1099; that stretch reads DGG. The segment at 1308 to 1435 is disordered; the sequence is MDKATQSTPP…NTNNETKNYL (128 aa). The span at 1311 to 1322 shows a compositional bias: polar residues; it reads ATQSTPPLQSKA. Basic and acidic residues-rich tracts occupy residues 1330 to 1361 and 1393 to 1424; these read SKEEARHEWEIKREQKQELAREQELERERELS and MDKKKTKDNDRDEVRGSAEDTGKEKEEDKENR. Over residues 1425 to 1435 the composition is skewed to polar residues; the sequence is SNTNNETKNYL.

Belongs to the NTE family. In terms of assembly, interacts with Pka-C3; interaction inhibits the catalytic function of Pka-C3 and the esterase activity of sws.

The protein localises to the endoplasmic reticulum membrane. It catalyses the reaction a 1-acyl-sn-glycero-3-phosphocholine + H2O = sn-glycerol 3-phosphocholine + a fatty acid + H(+). Phospholipase B that deacylates intracellular phosphatidylcholine (PtdCho), generating glycerophosphocholine (GroPtdCho). This deacylation occurs at both sn-2 and sn-1 positions of PtdCho. Its specific chemical modification by certain organophosphorus (OP) compounds leads to distal axonopathy. Plays a role in the signaling mechanism between neurons and glia that regulates glia wrapping during development of the adult brain. Essential for membrane lipid homeostasis and cell survival in both neurons and glia of the adult brain. This is Neuropathy target esterase sws from Drosophila persimilis (Fruit fly).